The primary structure comprises 228 residues: Lipoprotein-releasing system ATP-binding protein LolD (228 aa).

The region spanning Leu8–Leu228 is the ABC transporter domain. Gly44–Ser51 provides a ligand contact to ATP.

It belongs to the ABC transporter superfamily. Lipoprotein translocase (TC 3.A.1.125) family. In terms of assembly, the complex is composed of two ATP-binding proteins (LolD) and two transmembrane proteins (LolC and LolE).

It localises to the cell inner membrane. Its function is as follows. Part of the ABC transporter complex LolCDE involved in the translocation of mature outer membrane-directed lipoproteins, from the inner membrane to the periplasmic chaperone, LolA. Responsible for the formation of the LolA-lipoprotein complex in an ATP-dependent manner. In Alcanivorax borkumensis (strain ATCC 700651 / DSM 11573 / NCIMB 13689 / SK2), this protein is Lipoprotein-releasing system ATP-binding protein LolD.